The following is a 196-amino-acid chain: Small ribosomal subunit protein uS4c (196 aa).

The segment at 16–36 is disordered; that stretch reads GTLPGLTSKRPKSGSDLKTQL. The S4 RNA-binding domain maps to 89-150; it reads MRLDNILFRL…KQRSKALIQN (62 aa).

This sequence belongs to the universal ribosomal protein uS4 family. Part of the 30S ribosomal subunit. Contacts protein S5. The interaction surface between S4 and S5 is involved in control of translational fidelity.

The protein resides in the plastid. It localises to the chloroplast. Its function is as follows. One of the primary rRNA binding proteins, it binds directly to 16S rRNA where it nucleates assembly of the body of the 30S subunit. With S5 and S12 plays an important role in translational accuracy. The sequence is that of Small ribosomal subunit protein uS4c (rps4) from Rhapis humilis (Slender lady palm).